Consider the following 642-residue polypeptide: Threonine--tRNA ligase (642 aa).

One can recognise a TGS domain in the interval 1–61 (MPVIRFYDGS…REDAFIEFVD (61 aa)). A catalytic region spans residues 243–534 (DHRKIGKFLQ…LIEECSGNLP (292 aa)). Zn(2+)-binding residues include Cys-334, His-385, and His-511.

This sequence belongs to the class-II aminoacyl-tRNA synthetase family. Homodimer. It depends on Zn(2+) as a cofactor.

It is found in the cytoplasm. It carries out the reaction tRNA(Thr) + L-threonine + ATP = L-threonyl-tRNA(Thr) + AMP + diphosphate + H(+). In terms of biological role, catalyzes the attachment of threonine to tRNA(Thr) in a two-step reaction: L-threonine is first activated by ATP to form Thr-AMP and then transferred to the acceptor end of tRNA(Thr). Also edits incorrectly charged L-seryl-tRNA(Thr). This is Threonine--tRNA ligase from Buchnera aphidicola subsp. Acyrthosiphon pisum (strain 5A).